We begin with the raw amino-acid sequence, 1375 residues long: DNA-directed RNA polymerase subunit beta (1375 aa).

It belongs to the RNA polymerase beta chain family. As to quaternary structure, the RNAP catalytic core consists of 2 alpha, 1 beta, 1 beta' and 1 omega subunit. When a sigma factor is associated with the core the holoenzyme is formed, which can initiate transcription.

It carries out the reaction RNA(n) + a ribonucleoside 5'-triphosphate = RNA(n+1) + diphosphate. DNA-dependent RNA polymerase catalyzes the transcription of DNA into RNA using the four ribonucleoside triphosphates as substrates. In Methylibium petroleiphilum (strain ATCC BAA-1232 / LMG 22953 / PM1), this protein is DNA-directed RNA polymerase subunit beta.